The primary structure comprises 426 residues: MLDLRNVAQNFDAVVARLKTRGGNLDLGPFQRLFAERRELYVSVESLAARRNAANEEMKRKAKEDPKALDALRGDLRAVSQEIKEKEARLKDVEEELNRILLLIPNVPHESVPEGGGAEDNVQVSIWGQKPDLLFAPKQHFELGEKLGMLDFERAAKVSGSRFTFYKGALARLERALVTFMIDVHTSKGYTELLPPYLVLRETMMGTGQLPKFEDDAFKTLGEPERFLIPTAEVPVTNYHADEILEGESLPIRYCAFSPSFRAEAGAAGKDTRGLIRQHQFHKVELVKFAHQEKSLDELEAMTDDACDILRRLGIHHRVMLLCTGDMGFAARKTYDIEVWLPGQNSYREISSCSDCGDFQARRAKIRYRAQRGDKPQLAHTLNGSGLAVGRTTIAILENYQREDGSVAIPEALVPYMGGLKELKPI.

Residue 231–233 participates in L-serine binding; it reads TAE. Position 262–264 (262–264) interacts with ATP; the sequence is RAE. Glu285 contributes to the L-serine binding site. 349–352 provides a ligand contact to ATP; the sequence is EISS. Ser385 contributes to the L-serine binding site.

It belongs to the class-II aminoacyl-tRNA synthetase family. Type-1 seryl-tRNA synthetase subfamily. In terms of assembly, homodimer. The tRNA molecule binds across the dimer.

Its subcellular location is the cytoplasm. It carries out the reaction tRNA(Ser) + L-serine + ATP = L-seryl-tRNA(Ser) + AMP + diphosphate + H(+). The catalysed reaction is tRNA(Sec) + L-serine + ATP = L-seryl-tRNA(Sec) + AMP + diphosphate + H(+). The protein operates within aminoacyl-tRNA biosynthesis; selenocysteinyl-tRNA(Sec) biosynthesis; L-seryl-tRNA(Sec) from L-serine and tRNA(Sec): step 1/1. Catalyzes the attachment of serine to tRNA(Ser). Is also able to aminoacylate tRNA(Sec) with serine, to form the misacylated tRNA L-seryl-tRNA(Sec), which will be further converted into selenocysteinyl-tRNA(Sec). The polypeptide is Serine--tRNA ligase (Myxococcus xanthus (strain DK1622)).